Consider the following 246-residue polypeptide: ATP synthase subunit b 1 (246 aa).

Residues 5–27 (WFTFTAQVINFLVLVGLLRYFLY) form a helical membrane-spanning segment.

The protein belongs to the ATPase B chain family. In terms of assembly, F-type ATPases have 2 components, F(1) - the catalytic core - and F(0) - the membrane proton channel. F(1) has five subunits: alpha(3), beta(3), gamma(1), delta(1), epsilon(1). F(0) has three main subunits: a(1), b(2) and c(10-14). The alpha and beta chains form an alternating ring which encloses part of the gamma chain. F(1) is attached to F(0) by a central stalk formed by the gamma and epsilon chains, while a peripheral stalk is formed by the delta and b chains.

Its subcellular location is the cell inner membrane. F(1)F(0) ATP synthase produces ATP from ADP in the presence of a proton or sodium gradient. F-type ATPases consist of two structural domains, F(1) containing the extramembraneous catalytic core and F(0) containing the membrane proton channel, linked together by a central stalk and a peripheral stalk. During catalysis, ATP synthesis in the catalytic domain of F(1) is coupled via a rotary mechanism of the central stalk subunits to proton translocation. Functionally, component of the F(0) channel, it forms part of the peripheral stalk, linking F(1) to F(0). This Rhodopirellula baltica (strain DSM 10527 / NCIMB 13988 / SH1) protein is ATP synthase subunit b 1.